Consider the following 102-residue polypeptide: Small ribosomal subunit protein uS10 (102 aa).

This sequence belongs to the universal ribosomal protein uS10 family. In terms of assembly, part of the 30S ribosomal subunit.

In terms of biological role, involved in the binding of tRNA to the ribosomes. The sequence is that of Small ribosomal subunit protein uS10 from Streptococcus equi subsp. zooepidemicus (strain MGCS10565).